A 364-amino-acid polypeptide reads, in one-letter code: tRNA 2-selenouridine synthase (364 aa).

Residues Leu-14–Trp-137 form the Rhodanese domain. The active-site S-selanylcysteine intermediate is Cys-97.

It belongs to the SelU family. As to quaternary structure, monomer.

The catalysed reaction is 5-methylaminomethyl-2-thiouridine(34) in tRNA + selenophosphate + (2E)-geranyl diphosphate + H2O + H(+) = 5-methylaminomethyl-2-selenouridine(34) in tRNA + (2E)-thiogeraniol + phosphate + diphosphate. It catalyses the reaction 5-methylaminomethyl-2-thiouridine(34) in tRNA + (2E)-geranyl diphosphate = 5-methylaminomethyl-S-(2E)-geranyl-thiouridine(34) in tRNA + diphosphate. It carries out the reaction 5-methylaminomethyl-S-(2E)-geranyl-thiouridine(34) in tRNA + selenophosphate + H(+) = 5-methylaminomethyl-2-(Se-phospho)selenouridine(34) in tRNA + (2E)-thiogeraniol. The enzyme catalyses 5-methylaminomethyl-2-(Se-phospho)selenouridine(34) in tRNA + H2O = 5-methylaminomethyl-2-selenouridine(34) in tRNA + phosphate. Functionally, involved in the post-transcriptional modification of the uridine at the wobble position (U34) of tRNA(Lys), tRNA(Glu) and tRNA(Gln). Catalyzes the conversion of 2-thiouridine (S2U-RNA) to 2-selenouridine (Se2U-RNA). Acts in a two-step process involving geranylation of 2-thiouridine (S2U) to S-geranyl-2-thiouridine (geS2U) and subsequent selenation of the latter derivative to 2-selenouridine (Se2U) in the tRNA chain. The polypeptide is tRNA 2-selenouridine synthase (Salmonella gallinarum (strain 287/91 / NCTC 13346)).